Here is a 188-residue protein sequence, read N- to C-terminus: ADP-ribosylation factor J (188 aa).

GTP contacts are provided by residues 34 to 40 (DGAGKST), 75 to 79 (DVGGQ), and 134 to 137 (NKQD).

Belongs to the small GTPase superfamily. Arf family.

It localises to the golgi apparatus. GTP-binding protein that may be involved in protein trafficking. May modulate vesicle budding and uncoating within the Golgi apparatus. This Dictyostelium discoideum (Social amoeba) protein is ADP-ribosylation factor J (arrJ).